Here is a 125-residue protein sequence, read N- to C-terminus: Small ribosomal subunit protein uS12 (125 aa).

Position 89 is a 3-methylthioaspartic acid (Asp89). Positions 105–125 (QGVKDRKQSRSKYGAKKPKAK) are disordered. Positions 113–125 (SRSKYGAKKPKAK) are enriched in basic residues.

The protein belongs to the universal ribosomal protein uS12 family. Part of the 30S ribosomal subunit. Contacts proteins S8 and S17. May interact with IF1 in the 30S initiation complex.

Its function is as follows. With S4 and S5 plays an important role in translational accuracy. In terms of biological role, interacts with and stabilizes bases of the 16S rRNA that are involved in tRNA selection in the A site and with the mRNA backbone. Located at the interface of the 30S and 50S subunits, it traverses the body of the 30S subunit contacting proteins on the other side and probably holding the rRNA structure together. The combined cluster of proteins S8, S12 and S17 appears to hold together the shoulder and platform of the 30S subunit. The protein is Small ribosomal subunit protein uS12 of Delftia acidovorans (strain DSM 14801 / SPH-1).